Consider the following 144-residue polypeptide: Large ribosomal subunit protein uL13 (144 aa).

Residues 125–144 form a disordered region; sequence YRGPEHPHQAQKPQPLEVKA.

This sequence belongs to the universal ribosomal protein uL13 family. In terms of assembly, part of the 50S ribosomal subunit.

This protein is one of the early assembly proteins of the 50S ribosomal subunit, although it is not seen to bind rRNA by itself. It is important during the early stages of 50S assembly. This is Large ribosomal subunit protein uL13 from Aquifex aeolicus (strain VF5).